A 49-amino-acid polypeptide reads, in one-letter code: uncharacterized protein (49 aa).

The chain crosses the membrane as a helical span at residues 17–39 (LLVFDTSLYIPPFMLSFIGYSLS).

Its subcellular location is the membrane. This is an uncharacterized protein from Saccharomyces cerevisiae (strain ATCC 204508 / S288c) (Baker's yeast).